We begin with the raw amino-acid sequence, 353 residues long: Paraxanthine methyltransferase 2 (353 aa).

Tyr18 provides a ligand contact to S-adenosyl-L-methionine. Substrate-binding positions include Tyr18 and 21–25 (QSSYQ). S-adenosyl-L-methionine-binding positions include Gly59, 59 to 60 (GC), Asn65, 99 to 102 (FNDL), 128 to 130 (SFF), and 145 to 147 (SYA). 146 to 150 (YAFLF) contributes to the substrate binding site. Residues Asn167, Asp252, and Phe254 each coordinate Mg(2+). Substrate contacts are provided by Ser301 and Tyr306.

The protein belongs to the methyltransferase superfamily. SABATH family. Homodimer. Mg(2+) is required as a cofactor.

The chain is Paraxanthine methyltransferase 2 from Arabidopsis thaliana (Mouse-ear cress).